Consider the following 154-residue polypeptide: Protein-export protein SecB (154 aa).

The protein belongs to the SecB family. In terms of assembly, homotetramer, a dimer of dimers. One homotetramer interacts with 1 SecA dimer.

It is found in the cytoplasm. Its function is as follows. One of the proteins required for the normal export of preproteins out of the cell cytoplasm. It is a molecular chaperone that binds to a subset of precursor proteins, maintaining them in a translocation-competent state. It also specifically binds to its receptor SecA. In Vibrio parahaemolyticus serotype O3:K6 (strain RIMD 2210633), this protein is Protein-export protein SecB.